The chain runs to 292 residues: Acetyl-coenzyme A carboxylase carboxyl transferase subunit beta (292 aa).

A CoA carboxyltransferase N-terminal domain is found at leucine 29–asparagine 292. Residues cysteine 33, cysteine 36, cysteine 52, and cysteine 55 each contribute to the Zn(2+) site. The segment at cysteine 33–cysteine 55 adopts a C4-type zinc-finger fold.

It belongs to the AccD/PCCB family. As to quaternary structure, acetyl-CoA carboxylase is a heterohexamer composed of biotin carboxyl carrier protein (AccB), biotin carboxylase (AccC) and two subunits each of ACCase subunit alpha (AccA) and ACCase subunit beta (AccD). Requires Zn(2+) as cofactor.

It localises to the cytoplasm. It carries out the reaction N(6)-carboxybiotinyl-L-lysyl-[protein] + acetyl-CoA = N(6)-biotinyl-L-lysyl-[protein] + malonyl-CoA. It functions in the pathway lipid metabolism; malonyl-CoA biosynthesis; malonyl-CoA from acetyl-CoA: step 1/1. In terms of biological role, component of the acetyl coenzyme A carboxylase (ACC) complex. Biotin carboxylase (BC) catalyzes the carboxylation of biotin on its carrier protein (BCCP) and then the CO(2) group is transferred by the transcarboxylase to acetyl-CoA to form malonyl-CoA. The protein is Acetyl-coenzyme A carboxylase carboxyl transferase subunit beta of Prochlorococcus marinus subsp. pastoris (strain CCMP1986 / NIES-2087 / MED4).